Here is a 254-residue protein sequence, read N- to C-terminus: DNA repair protein RecO (254 aa).

It belongs to the RecO family.

Its function is as follows. Involved in DNA repair and RecF pathway recombination. This chain is DNA repair protein RecO, found in Rhodopseudomonas palustris (strain BisB18).